A 252-amino-acid polypeptide reads, in one-letter code: MTRTILSSSSSLSPQQAGSPVIVALDYADARQALAFADRVAPSQCRLKIGKEMFTQAGPALVRDLQQRGFEVFLDLKFHDIPNTVAKAVSAAAELGVWMVNVHASGGERMMAAAREALVPFGADAPVLIAVTVLTSMNDEDLRGIGIAGSASDHAVRLAILAQACGLDGVVCSAWEAARLKTDCGAGFALVTPGIRPTGSDAGDQRRVMTPLQAQQVGVDYMVIGRPITQAADPAATLAAILQELQPGGADV.

Residues aspartate 26, lysine 48, aspartate 75–threonine 84, threonine 135, arginine 196, glutamine 205, glycine 225, and arginine 226 each bind substrate. Lysine 77 (proton donor) is an active-site residue.

Belongs to the OMP decarboxylase family. Type 1 subfamily. Homodimer.

The enzyme catalyses orotidine 5'-phosphate + H(+) = UMP + CO2. It participates in pyrimidine metabolism; UMP biosynthesis via de novo pathway; UMP from orotate: step 2/2. In terms of biological role, catalyzes the decarboxylation of orotidine 5'-monophosphate (OMP) to uridine 5'-monophosphate (UMP). This chain is Orotidine 5'-phosphate decarboxylase, found in Sodalis glossinidius (strain morsitans).